The sequence spans 151 residues: UPF0719 transmembrane protein MAP_1032c (151 aa).

Transmembrane regions (helical) follow at residues 20–40 (VATI…FYAV), 60–80 (AVVV…TAIA), 90–110 (LVGV…ALLA), and 130–150 (PGSF…AAAV).

The protein belongs to the UPF0719 family.

It localises to the cell membrane. The sequence is that of UPF0719 transmembrane protein MAP_1032c from Mycolicibacterium paratuberculosis (strain ATCC BAA-968 / K-10) (Mycobacterium paratuberculosis).